The sequence spans 258 residues: GCN5-related N-acetyltransferase 2, chloroplastic (258 aa).

A chloroplast-targeting transit peptide spans 1–58; it reads MLLIPISSSSSSSISPPPNSYPSNHHSLFFSNLTFPIQHGSRKLKTLRLRANFWESIR. Residues 107–194 form an interaction with begomoviruses NSP protein region; that stretch reads IIFSSGGEID…DHAFNATIWD (88 aa). Residues 107-258 enclose the N-acetyltransferase domain; that stretch reads IIFSSGGEID…GIKGMFWYPK (152 aa). Residues 195 to 197, 203 to 208, 231 to 233, and Y238 each bind acetyl-CoA; these read VLV, GQGLGK, and DSQ. The active-site Proton donor is Y238.

This sequence belongs to the acetyltransferase family. GNAT subfamily. In terms of assembly, oligomer. Interacts with begomoviruses NSP but not with CP. This interaction may allow NSP to recruit NSI monomers to acetylate viral genome-bound CP and thus regulate nuclear export of viral genome by NSP. Post-translationally, S-sulfhydrated and activated by hydrogen sulfide H(2)S to promote melatonin accumulation and subsequent melatonin-dependent stomotal closure to combat osmotic stress. In terms of processing, autoacetylated. Highly expressed in cauline leaves and seeds, at lower levels in stems, siliques, inflorescences and rosettes leaves and at very low levels in roots. Expressed in the xylem parenchyma and phloem of the leaves and root, and in guard cells of young leaves.

The protein localises to the plastid. It is found in the chloroplast. The catalysed reaction is 5-methoxytryptamine + acetyl-CoA = melatonin + CoA + H(+). It catalyses the reaction L-lysyl-[histone] + acetyl-CoA = N(6)-acetyl-L-lysyl-[histone] + CoA + H(+). The enzyme catalyses L-lysyl-[protein] + acetyl-CoA = N(6)-acetyl-L-lysyl-[protein] + CoA + H(+). It carries out the reaction serotonin + acetyl-CoA = N-acetylserotonin + CoA + H(+). The catalysed reaction is N-terminal L-alanyl-[protein] + acetyl-CoA = N-terminal N(alpha)-acetyl-L-alanyl-[protein] + CoA + H(+). It catalyses the reaction N-terminal L-seryl-[protein] + acetyl-CoA = N-terminal N(alpha)-acetyl-L-seryl-[protein] + CoA + H(+). The enzyme catalyses N-terminal L-valyl-[protein] + acetyl-CoA = N-terminal N(alpha)-acetyl-L-valyl-[protein] + CoA + H(+). It carries out the reaction N-terminal glycyl-[protein] + acetyl-CoA = N-terminal N(alpha)-acetylglycyl-[protein] + CoA + H(+). The catalysed reaction is an N-terminal L-alpha-aminoacyl-[protein] + acetyl-CoA = N-terminal N(alpha)-acetyl-L-alpha-aminoacyl-[protein] + CoA + H(+). It catalyses the reaction N-terminal L-threonyl-[protein] + acetyl-CoA = N-terminal N(alpha)-acetyl-L-threonyl-[protein] + CoA + H(+). The enzyme catalyses N-terminal L-methionyl-[protein] + acetyl-CoA = N-terminal N(alpha)-acetyl-L-methionyl-[protein] + CoA + H(+). It carries out the reaction N-terminal L-leucyl-[protein] + acetyl-CoA = N-terminal N(alpha)-acetyl-L-leucyl-[protein] + CoA + H(+). Inhibited by the viral nuclear shuttle protein (NSP) that binds to the region required for oligomerization. Functionally, protein acetyltransferase with dual specificity triggering both N-alpha-acetylation (NTA), with a preference for alanine, serine, threonine, methionine and to a lower extent valine as substrates (can also use glycine and leucine), and epsilon-lysine acetylation (KA) of several plastid proteins. Triggers lysine acetylation in KEA1 and KEA2. Acetylates in vitro histones H2A and H3. Does not act as a transcriptional activator but required for the dynamic reorganization of thylakoid protein complexes and grana during photosynthetic state transitions. Involved in melatonin biosynthesis by catalyzing the formation of N-acetylserotonin (NAS) from serotonin and of melatonin (N-acetyl-5-methoxytryptamine) from 5-methoxytryptamine (5-MT). By triggering melatonin biosynthesis, contributes to the chloroplast protein quality control (CPQC), which plays a pivotal role in starch synthesis, and confers melatonin-associated tolerance to high light (HL) stress. Prevents the accumulation of oil and anthocyanin content in mature seeds and avoids seed germination in a melatonin-dependent manner, but promotes mucilage production in the seed coat. Contributes to melatonin-mediated anthocyanin production in cold-exposed seedlings. Implicated in melatonin-monitored circadian dynamics of stomatal aperture to minimize night water loss and promote drought tolerance, partly by triggering hydrogen sulfide H(2)S-dependent stomotal closure in response to osmotic stress. Its function is as follows. (Microbial infection) Required for begomovirus infection and systemic spread. In case of begomoviruses infection, acetylates the capsid protein (CP), but not the nuclear shuttle protein (NSP). Stimulates melatonin-triggered defense responses to the necrotrophic Botrytis cinerea. The polypeptide is GCN5-related N-acetyltransferase 2, chloroplastic (Arabidopsis thaliana (Mouse-ear cress)).